Consider the following 244-residue polypeptide: MKIEVCIDNIESVHIAQNAGADRLELCACLSVGGVTPSYSLIKSAVDFANIPCYVMIRPRAGDFLFSTQEVNMMLDDIHLAKQLGAQGIVIGALTKHADIDLSVCETLIQAAEGLGVTFHRAFDLCRDPVTSLEQLIQLGCERVLTSGQKASAVEGQPLIKQLVSQASNRIRIMAGAGINAQNAALLVKNTGITELHLSGKGYRLSEMPYHANAVMGENSEDDQKIWRTDFATIRAVKTSVEKY.

The protein belongs to the CutC family.

The protein localises to the cytoplasm. This is PF03932 family protein CutC from Pasteurella multocida (strain Pm70).